Consider the following 47-residue polypeptide: Gas vesicle protein A (47 aa).

The protein belongs to the gas vesicle GvpA family. The gas vesicle shell is 2 nm thick and consists of a single layer of this protein. It forms helical ribs nearly perpendicular to the long axis of the vesicle.

The protein localises to the gas vesicle shell. Its function is as follows. Gas vesicles are hollow, gas filled proteinaceous nanostructures found in some microorganisms. During planktonic growth they allow positioning of the organism at a favorable depth for light or nutrient acquisition. GvpA forms the protein shell. This chain is Gas vesicle protein A, found in Dactylococcopsis salina (Myxobaktron salinum).